The primary structure comprises 130 residues: YopE regulator (130 aa).

Its function is as follows. Positive regulator of YopE. In Yersinia pestis, this protein is YopE regulator (yerA).